The following is a 531-amino-acid chain: Transmembrane protein 266 (531 aa).

The Cytoplasmic portion of the chain corresponds to 1–102 (MALAASFNMT…VFLLSASLNS (102 aa)). The helical transmembrane segment at 103–123 (FLVACVILVVILLTLELLIDI) threads the bilayer. At 124 to 129 (KLLQFS) the chain is on the extracellular side. Residues 130-150 (SAFQFAGVIHWISLVILSVFF) traverse the membrane as a helical segment. Residues 151–169 (SETVLRIVVLGIWDYIENK) are Cytoplasmic-facing. Residues 170-190 (IEVFDGAVIILSLAPMVASTV) traverse the membrane as a helical segment. The Extracellular portion of the chain corresponds to 191–199 (ANGPRSPWD). Residues 200-220 (AISLIIMLRIWRVKRVIDAYV) form a helical membrane-spanning segment. Residues 221-531 (LPVKLEMEMV…EQKLHRVPEA (311 aa)) are Cytoplasmic-facing. Positions 231-251 (IQQYEKAKVIQDEQLERLTQI) form a coiled coil. The disordered stretch occupies residues 380-477 (NGTGATSESA…PAGSAQTSPE (98 aa)). A compositionally biased stretch (polar residues) spans 383–412 (GATSESASRSSVTRAQSDSSQTLGSSTDCS). Positions 421 to 431 (EPGPSPLPLPP) are enriched in pro residues.

As to quaternary structure, homodimer; disulfide-linked.

It localises to the cell membrane. Its subcellular location is the cell projection. The protein resides in the dendrite. It is found in the perikaryon. Its function is as follows. Voltage-sensor protein present on the post-synaptic side of glutamatergic mossy fibers and granule cells in the cerebellum. Despite the presence of a voltage-sensor segment, does not form a functional ion channel and its precise role remains unclear. Undergoes both rapid and slow structural rearrangements in response to changes in voltage. Contains a zinc-binding site that can regulate the slow conformational transition. The chain is Transmembrane protein 266 from Macaca fascicularis (Crab-eating macaque).